The primary structure comprises 172 residues: RNA silencing suppressor p19 (172 aa).

Composition is skewed to basic and acidic residues over residues 1-14 (MERA…REQA) and 150-172 (SERE…EESE). 2 disordered regions span residues 1-34 (MERA…KLPD) and 145-172 (LQPT…EESE).

It belongs to the tombusvirus protein p19 family. Homodimer.

Viral suppressor of RNA silencing which binds specifically to silencing RNAs (siRNAs). Acts as a molecular caliper to specifically select siRNAs based on the length of the duplex region of the RNA. The chain is RNA silencing suppressor p19 from Cymbidium ringspot virus (CymRSV).